The following is a 314-amino-acid chain: tRNA pseudouridine synthase B (314 aa).

Asp-54 (nucleophile) is an active-site residue.

It belongs to the pseudouridine synthase TruB family. Type 1 subfamily.

The enzyme catalyses uridine(55) in tRNA = pseudouridine(55) in tRNA. Responsible for synthesis of pseudouridine from uracil-55 in the psi GC loop of transfer RNAs. The protein is tRNA pseudouridine synthase B of Ralstonia nicotianae (strain ATCC BAA-1114 / GMI1000) (Ralstonia solanacearum).